Consider the following 582-residue polypeptide: Actin-histidine N-methyltransferase (582 aa).

S-adenosyl-L-methionine is bound by residues Arg-75, 104–106 (EGF), Arg-254, 275–279 (DMCNH), and 325–327 (NGF). The region spanning 94–314 (DGFELVEFPE…SGEQIYIFYG (221 aa)) is the SET domain. Residues 550 to 582 (DKDLLPNGTKSENDSFLAEDNQQETGNAKDFCS) form a disordered region.

It belongs to the class V-like SAM-binding methyltransferase superfamily. SETD3 actin-histidine methyltransferase family.

The protein localises to the cytoplasm. It carries out the reaction L-histidyl-[protein] + S-adenosyl-L-methionine = N(tele)-methyl-L-histidyl-[protein] + S-adenosyl-L-homocysteine + H(+). Its function is as follows. Protein-histidine N-methyltransferase that specifically mediates 3-methylhistidine (tele-methylhistidine) methylation of actin at 'His-73'. Does not have protein-lysine N-methyltransferase activity and probably only catalyzes histidine methylation of actin. In Xenopus tropicalis (Western clawed frog), this protein is Actin-histidine N-methyltransferase.